The sequence spans 76 residues: Exodeoxyribonuclease 7 small subunit (76 aa).

It belongs to the XseB family. In terms of assembly, heterooligomer composed of large and small subunits.

The protein localises to the cytoplasm. It carries out the reaction Exonucleolytic cleavage in either 5'- to 3'- or 3'- to 5'-direction to yield nucleoside 5'-phosphates.. In terms of biological role, bidirectionally degrades single-stranded DNA into large acid-insoluble oligonucleotides, which are then degraded further into small acid-soluble oligonucleotides. This chain is Exodeoxyribonuclease 7 small subunit, found in Legionella pneumophila (strain Paris).